The following is a 732-amino-acid chain: Aldehyde oxidoreductase molybdenum-binding subunit PaoC (732 aa).

Mo-molybdopterin cytosine dinucleotide-binding positions include glycine 241–phenylalanine 242, isoleucine 468–threonine 470, glycine 511–alanine 512, arginine 615–threonine 621, glutamine 625, and lysine 688–glycine 691. Residue glutamate 692 is the Proton acceptor of the active site.

It belongs to the xanthine dehydrogenase family. As to quaternary structure, heterotrimer composed of PaoA, PaoB and PaoC. Mo-molybdopterin cytosine dinucleotide serves as cofactor.

The protein resides in the periplasm. It catalyses the reaction an aldehyde + A + H2O = a carboxylate + AH2 + H(+). With respect to regulation, the complex requires PaoD for activity. In terms of biological role, oxidizes aldehydes to the corresponding carboxylic acids with a preference for aromatic aldehydes. It might play a role in the detoxification of aldehydes to avoid cell damage. This is Aldehyde oxidoreductase molybdenum-binding subunit PaoC from Escherichia coli (strain K12).